A 523-amino-acid polypeptide reads, in one-letter code: Na(+)/H(+) antiporter NhaB (523 aa).

10 consecutive transmembrane segments (helical) span residues 28–48 (FLIINPFIVALNPFVAGWLLV), 51–71 (FIFTLSMALKCYPLLPGGLLA), 89–109 (LSANLEVLLLLMFMVAGIYFV), 137–157 (MAAFLSAFLDALTVVAVVISI), 237–257 (FFIRMSAVSIPVLICGLATCV), 302–322 (AIICVWLIVGLAFHLAAVGLI), 347–367 (TESLPFTALLSVFFVVVAVII), 390–410 (LFYIANGVLSMVSDNVFVGTV), 445–465 (VATPNGQAAFLFLLTSTLAPL), and 476–496 (MALPYTIVLAGVGLLSTMYLL).

The protein belongs to the NhaB Na(+)/H(+) (TC 2.A.34) antiporter family.

The protein resides in the cell inner membrane. It carries out the reaction 2 Na(+)(in) + 3 H(+)(out) = 2 Na(+)(out) + 3 H(+)(in). In terms of biological role, na(+)/H(+) antiporter that extrudes sodium in exchange for external protons. The chain is Na(+)/H(+) antiporter NhaB from Tolumonas auensis (strain DSM 9187 / NBRC 110442 / TA 4).